The chain runs to 455 residues: Golgi pH regulator A (455 aa).

The next 5 helical transmembrane spans lie at 5-25, 46-66, 79-99, 114-134, and 150-170; these read IDSS…WLFF, VTFA…LGVL, LCVI…YFIV, CLLW…FPIL, and VGVI…VNCP. Asparagine 180 and asparagine 243 each carry an N-linked (GlcNAc...) asparagine glycan. 4 helical membrane passes run 290 to 310, 343 to 363, 378 to 398, and 425 to 445; these read GYFF…NIVF, ISFI…LITL, VIVL…VLLI, and WFDV…YLAH.

The protein belongs to the Golgi pH regulator (TC 1.A.38) family. Homotrimer. Interacts with RABL3; the interaction stabilizes GPR89A. In terms of tissue distribution, ubiquitous.

The protein resides in the golgi apparatus membrane. It catalyses the reaction iodide(out) = iodide(in). It carries out the reaction chloride(in) = chloride(out). The catalysed reaction is bromide(in) = bromide(out). The enzyme catalyses fluoride(in) = fluoride(out). Voltage-gated channel that enables the transfer of monoatomic anions such as iodide, chloride, bromide and fluoride which may function in counter-ion conductance and participates in Golgi acidification. Plays a role in lymphocyte development, probably by acting as a RABL3 effector in hematopoietic cells. This is Golgi pH regulator A from Homo sapiens (Human).